A 421-amino-acid polypeptide reads, in one-letter code: Putative bifunctional polynucleotide phosphatase/kinase (421 aa).

Positions aspartate 25 to leucine 231 are phosphatase. The segment at asparagine 235 to methionine 415 is kinase. Glycine 265–serine 272 contacts ATP.

It in the N-terminal section; belongs to the DNA 3' phosphatase family.

The enzyme catalyses a 3'end (2'-deoxyribonucleotide 3'-phosphate)-DNA + H2O = a 3'-end 2'-deoxyribonucleotide-DNA + phosphate. It catalyses the reaction a 5'-end dephospho-2'-deoxyribonucleoside-DNA + ATP = a 5'-end 5'-phospho-2'-deoxyribonucleoside-DNA + ADP + H(+). The sequence is that of Putative bifunctional polynucleotide phosphatase/kinase from Acanthamoeba polyphaga mimivirus (APMV).